We begin with the raw amino-acid sequence, 77 residues long: Small ribosomal subunit protein bS18 (77 aa).

It belongs to the bacterial ribosomal protein bS18 family. Part of the 30S ribosomal subunit. Forms a tight heterodimer with protein bS6.

Functionally, binds as a heterodimer with protein bS6 to the central domain of the 16S rRNA, where it helps stabilize the platform of the 30S subunit. The chain is Small ribosomal subunit protein bS18 from Shouchella clausii (strain KSM-K16) (Alkalihalobacillus clausii).